The chain runs to 543 residues: ADIPOR-like receptor IZH3 (543 aa).

Over 1 to 259 (MMDSSSKSLT…NWYGWHNETS (259 aa)) the chain is Lumenal. Residues asparagine 45, asparagine 123, asparagine 153, and asparagine 256 are each glycosylated (N-linked (GlcNAc...) asparagine). A helical transmembrane segment spans residues 260 to 280 (NIWSHLLGAIYIIYLAIYDFP). Residues 281–295 (QSEVWRNSQVPPQAR) lie on the Cytoplasmic side of the membrane. A helical membrane pass occupies residues 296–316 (WIVFMFLAAALKCMLSSVFWH). Residues 317-330 (TFNGTSFLKLRSKF) lie on the Lumenal side of the membrane. Asparagine 319 carries N-linked (GlcNAc...) asparagine glycosylation. A helical membrane pass occupies residues 331-353 (ACVDYSGITILITASILTTEFVT). The Cytoplasmic segment spans residues 354–357 (MYSC). A helical transmembrane segment spans residues 358-378 (YWAMYTYMSISLALGVFGVFM). Over 379–395 (NWSPRFDRPEARPLRIR) the chain is Lumenal. A helical membrane pass occupies residues 396–416 (FFILLATMGVLSFLHLIFLTD). Over 417–425 (LHYAATLFS) the chain is Cytoplasmic. The helical transmembrane segment at 426-446 (PVTYKSVVWYLVGVVFYGSFI) threads the bilayer. The Lumenal portion of the chain corresponds to 447–505 (PERFRSDVQVDKTIPTNYELSTDLEIITKQREIHFREVPTAHSKCSSCPSHAKSFKSLW). Residues 506–526 (WVDYFGCSHTFWHFFVVLGVI) traverse the membrane as a helical segment. The Cytoplasmic portion of the chain corresponds to 527–543 (GHYRAILDMFAKRWILS).

The protein belongs to the ADIPOR family.

The protein localises to the endoplasmic reticulum membrane. Its function is as follows. ADIPOR-like receptor involved in zinc metabolism either by altering membrane sterol content or by directly altering cellular zinc levels. The sequence is that of ADIPOR-like receptor IZH3 (IZH3) from Saccharomyces cerevisiae (strain ATCC 204508 / S288c) (Baker's yeast).